The chain runs to 333 residues: uncharacterized protein (333 aa).

This is an uncharacterized protein from Mycolicibacterium smegmatis (Mycobacterium smegmatis).